A 375-amino-acid polypeptide reads, in one-letter code: MSTAGKVIKCKAAVLWEVKKPFSIEDVEVAPPKAYEVRIKMVAVGICHTDDHVVSGNLVTPLPVILGHEAAGIVESVGEGVTTVKPGDKVIPLFTPQCGKCRVCKNPESNYCLKNDLGNPRGTLQDGTRRFTCRGKPIHHFLGTSTFSQYTVVDENAVAKIDAASPLEKVCLIGCGFSTGYGSAVNVAKVTPGSTCAVFGLGGVGLSAVMGCKAAGAARIIAVDINKDKFAKAKELGATECINPQDYKKPIQEVLKEMTDGGVDFSFEVIGRLDTMMASLLCCHEACGTSVIVGVPPASQNLSINPMLLLTGRTWKGAVYGGFKSKEGIPKLVADFMAKKFSLDALITHVLPFEKINEGFDLLHSGKSIRTVLTF.

Position 2 is an N-acetylserine (Ser-2). Position 23 is a phosphoserine (Ser-23). Residue Tyr-35 is modified to Phosphotyrosine. Zn(2+) is bound by residues Cys-47, His-68, Cys-98, Cys-101, Cys-104, Cys-112, and Cys-175. NAD(+) is bound by residues 200-205 (GLGGVG), Asp-224, Lys-229, 293-295 (VGV), and Arg-370.

It belongs to the zinc-containing alcohol dehydrogenase family. In terms of assembly, dimer of identical or non-identical chains of three types; alpha, beta and gamma. Zn(2+) is required as a cofactor.

Its subcellular location is the cytoplasm. The enzyme catalyses all-trans-retinol + NAD(+) = all-trans-retinal + NADH + H(+). It carries out the reaction all-trans-4-hydroxyretinol + NAD(+) = all-trans-4-hydroxyretinal + NADH + H(+). It catalyses the reaction all-trans-4-oxoretinol + NAD(+) = all-trans-4-oxoretinal + NADH + H(+). In terms of biological role, catalyzes the NAD-dependent oxidation of all-trans-retinol and its derivatives such as all-trans-4-hydroxyretinol and may participate in retinoid metabolism. In vitro can also catalyze the NADH-dependent reduction of all-trans-retinal and its derivatives such as all-trans-4-oxoretinal. Catalyzes in the oxidative direction with higher efficiency. Has the same affinity for all-trans-4-hydroxyretinol and all-trans-4-oxoretinal. The sequence is that of All-trans-retinol dehydrogenase [NAD(+)] ADH1B from Homo sapiens (Human).